A 228-amino-acid chain; its full sequence is L-ribulose-5-phosphate 4-epimerase UlaF (228 aa).

Residues 26–27, 43–44, and 72–73 each bind substrate; these read GN, SG, and SS. Zn(2+) is bound by residues D74, H93, and H95. D118 serves as the catalytic Proton donor/acceptor. H167 lines the Zn(2+) pocket. Y225 (proton donor/acceptor) is an active-site residue.

Belongs to the aldolase class II family. AraD/FucA subfamily. Zn(2+) is required as a cofactor.

It carries out the reaction L-ribulose 5-phosphate = D-xylulose 5-phosphate. Its pathway is cofactor degradation; L-ascorbate degradation; D-xylulose 5-phosphate from L-ascorbate: step 4/4. Its function is as follows. Catalyzes the isomerization of L-ribulose 5-phosphate to D-xylulose 5-phosphate. Is involved in the anaerobic L-ascorbate utilization. This is L-ribulose-5-phosphate 4-epimerase UlaF from Escherichia coli (strain ATCC 8739 / DSM 1576 / NBRC 3972 / NCIMB 8545 / WDCM 00012 / Crooks).